The following is a 306-amino-acid chain: N-acetylmuramic acid 6-phosphate etherase (306 aa).

An SIS domain is found at 55-218 (AAATLLAGGR…STGAMIKIGK (164 aa)). The Proton donor role is filled by Glu83. Glu114 is a catalytic residue.

The protein belongs to the GCKR-like family. MurNAc-6-P etherase subfamily. In terms of assembly, homodimer.

The catalysed reaction is N-acetyl-D-muramate 6-phosphate + H2O = N-acetyl-D-glucosamine 6-phosphate + (R)-lactate. It participates in amino-sugar metabolism; 1,6-anhydro-N-acetylmuramate degradation. The protein operates within amino-sugar metabolism; N-acetylmuramate degradation. It functions in the pathway cell wall biogenesis; peptidoglycan recycling. Specifically catalyzes the cleavage of the D-lactyl ether substituent of MurNAc 6-phosphate, producing GlcNAc 6-phosphate and D-lactate. Together with AnmK, is also required for the utilization of anhydro-N-acetylmuramic acid (anhMurNAc) either imported from the medium or derived from its own cell wall murein, and thus plays a role in cell wall recycling. In Erwinia tasmaniensis (strain DSM 17950 / CFBP 7177 / CIP 109463 / NCPPB 4357 / Et1/99), this protein is N-acetylmuramic acid 6-phosphate etherase.